A 325-amino-acid chain; its full sequence is Thiamine-monophosphate kinase (325 aa).

Mg(2+) is bound by residues Asp-30, Ser-45, Thr-46, and Asp-47. His-54 is a substrate binding site. 2 residues coordinate Mg(2+): Asp-75 and Asp-122. Residues 121 to 122 and Arg-146 contribute to the ATP site; that span reads GD. Position 212 (Asp-212) interacts with Mg(2+). Residue Ser-214 coordinates ATP. Asp-215 serves as a coordination point for Mg(2+). Substrate contacts are provided by Glu-263 and Tyr-319.

Belongs to the thiamine-monophosphate kinase family.

It catalyses the reaction thiamine phosphate + ATP = thiamine diphosphate + ADP. It functions in the pathway cofactor biosynthesis; thiamine diphosphate biosynthesis; thiamine diphosphate from thiamine phosphate: step 1/1. Catalyzes the ATP-dependent phosphorylation of thiamine-monophosphate (TMP) to form thiamine-pyrophosphate (TPP), the active form of vitamin B1. This Escherichia coli O157:H7 protein is Thiamine-monophosphate kinase.